The chain runs to 497 residues: tRNA-2-methylthio-N(6)-dimethylallyladenosine synthase (497 aa).

The span at 1 to 10 (MTLLDSDSRQ) shows a compositional bias: basic and acidic residues. Positions 1–26 (MTLLDSDSRQSAEVLPAAGPAPDRPR) are disordered. One can recognise an MTTase N-terminal domain in the interval 26–142 (RTYQVRTFGC…LPVLLERARI (117 aa)). Positions 35, 71, 105, 179, 183, and 186 each coordinate [4Fe-4S] cluster. The Radical SAM core domain maps to 165 to 395 (RESVYAAWVA…VALVEQIALE (231 aa)). The 67-residue stretch at 398-464 (QAQVGRVVEV…PHCLIADQVL (67 aa)) folds into the TRAM domain.

The protein belongs to the methylthiotransferase family. MiaB subfamily. Monomer. The cofactor is [4Fe-4S] cluster.

It is found in the cytoplasm. The enzyme catalyses N(6)-dimethylallyladenosine(37) in tRNA + (sulfur carrier)-SH + AH2 + 2 S-adenosyl-L-methionine = 2-methylsulfanyl-N(6)-dimethylallyladenosine(37) in tRNA + (sulfur carrier)-H + 5'-deoxyadenosine + L-methionine + A + S-adenosyl-L-homocysteine + 2 H(+). Catalyzes the methylthiolation of N6-(dimethylallyl)adenosine (i(6)A), leading to the formation of 2-methylthio-N6-(dimethylallyl)adenosine (ms(2)i(6)A) at position 37 in tRNAs that read codons beginning with uridine. The sequence is that of tRNA-2-methylthio-N(6)-dimethylallyladenosine synthase from Acidothermus cellulolyticus (strain ATCC 43068 / DSM 8971 / 11B).